Consider the following 346-residue polypeptide: Probable dual-specificity RNA methyltransferase RlmN (346 aa).

Glu90 serves as the catalytic Proton acceptor. In terms of domain architecture, Radical SAM core spans 96-330 (TRDRLTVCVS…VSVRASRGLD (235 aa)). Cys103 and Cys335 are disulfide-bonded. Positions 110, 114, and 117 each coordinate [4Fe-4S] cluster. S-adenosyl-L-methionine-binding positions include 157-158 (GE), Ser187, 216-218 (SLH), and Asn292. The S-methylcysteine intermediate role is filled by Cys335.

Belongs to the radical SAM superfamily. RlmN family. [4Fe-4S] cluster serves as cofactor.

The protein localises to the cytoplasm. The catalysed reaction is adenosine(2503) in 23S rRNA + 2 reduced [2Fe-2S]-[ferredoxin] + 2 S-adenosyl-L-methionine = 2-methyladenosine(2503) in 23S rRNA + 5'-deoxyadenosine + L-methionine + 2 oxidized [2Fe-2S]-[ferredoxin] + S-adenosyl-L-homocysteine. It carries out the reaction adenosine(37) in tRNA + 2 reduced [2Fe-2S]-[ferredoxin] + 2 S-adenosyl-L-methionine = 2-methyladenosine(37) in tRNA + 5'-deoxyadenosine + L-methionine + 2 oxidized [2Fe-2S]-[ferredoxin] + S-adenosyl-L-homocysteine. Specifically methylates position 2 of adenine 2503 in 23S rRNA and position 2 of adenine 37 in tRNAs. This Synechococcus sp. (strain RCC307) protein is Probable dual-specificity RNA methyltransferase RlmN.